The sequence spans 128 residues: Regulator of ribonuclease activity B (128 aa).

This sequence belongs to the RraB family. Interacts with the C-terminal region of Rne.

The protein resides in the cytoplasm. In terms of biological role, globally modulates RNA abundance by binding to RNase E (Rne) and regulating its endonucleolytic activity. Can modulate Rne action in a substrate-dependent manner by altering the composition of the degradosome. The protein is Regulator of ribonuclease activity B of Idiomarina loihiensis (strain ATCC BAA-735 / DSM 15497 / L2-TR).